The chain runs to 261 residues: Small ribosomal subunit protein eS1 (261 aa).

Basic residues predominate over residues 1–18 (MAVGKNKRISKGKKGGKK). A disordered region spans residues 1–20 (MAVGKNKRISKGKKGGKKKA).

Belongs to the eukaryotic ribosomal protein eS1 family. As to quaternary structure, component of the small ribosomal subunit. Mature ribosomes consist of a small (40S) and a large (60S) subunit. The 40S subunit contains about 33 different proteins and 1 molecule of RNA (18S). The 60S subunit contains about 49 different proteins and 3 molecules of RNA (25S, 5.8S and 5S).

It is found in the cytoplasm. This chain is Small ribosomal subunit protein eS1, found in Catharanthus roseus (Madagascar periwinkle).